The primary structure comprises 21 residues: Trypsin (21 aa).

Belongs to the peptidase S1 family.

The protein resides in the secreted. Its subcellular location is the extracellular space. The enzyme catalyses Preferential cleavage: Arg-|-Xaa, Lys-|-Xaa.. This chain is Trypsin, found in Apis mellifera scutellata (Africanized honey bee).